A 405-amino-acid chain; its full sequence is Serine/threonine transporter SstT (405 aa).

8 helical membrane passes run 13 to 33 (GGSL…LAGF), 43 to 63 (FLGD…VFVL), 82 to 102 (IILL…LMSF), 141 to 161 (ALIN…GIAL), 185 to 205 (FVIC…IAQT), 217 to 237 (LGVL…LIVF), 298 to 318 (MAGA…TLGI), and 339 to 359 (ASGV…LFGI).

Belongs to the dicarboxylate/amino acid:cation symporter (DAACS) (TC 2.A.23) family.

Its subcellular location is the cell inner membrane. It carries out the reaction L-serine(in) + Na(+)(in) = L-serine(out) + Na(+)(out). The catalysed reaction is L-threonine(in) + Na(+)(in) = L-threonine(out) + Na(+)(out). Functionally, involved in the import of serine and threonine into the cell, with the concomitant import of sodium (symport system). In Shewanella amazonensis (strain ATCC BAA-1098 / SB2B), this protein is Serine/threonine transporter SstT.